A 189-amino-acid polypeptide reads, in one-letter code: Dynactin subunit 6 (189 aa).

Belongs to the dynactin subunits 5/6 family. Dynactin subunit 6 subfamily. Subunit of dynactin, a multiprotein complex part of a tripartite complex with dynein and a adapter, such as BICDL1, BICD2 or HOOK3. The dynactin complex is built around ACTR1A/ACTB filament and consists of an actin-related filament composed of a shoulder domain, a pointed end and a barbed end.

The protein localises to the cytoplasm. The protein resides in the cytoskeleton. Functionally, part of the dynactin complex that activates the molecular motor dynein for ultra-processive transport along microtubules. In Dictyostelium discoideum (Social amoeba), this protein is Dynactin subunit 6 (dynF).